Consider the following 302-residue polypeptide: Short-chain dehydrogenase/reductase 3 (302 aa).

Helical transmembrane passes span 9 to 29 (LVVF…GLVL), 170 to 190 (IVCL…DYCT), 195 to 215 (AFAF…VSAT), and 253 to 273 (AVQL…LIIL). Ser-175 provides a ligand contact to substrate. The active-site Proton acceptor is Tyr-188.

The protein belongs to the short-chain dehydrogenases/reductases (SDR) family. In the retina, expressed in cone but not rod outer segments.

It localises to the membrane. It catalyses the reaction all-trans-retinol + NADP(+) = all-trans-retinal + NADPH + H(+). Its function is as follows. Catalyzes the reduction of all-trans-retinal to all-trans-retinol in the presence of NADPH. The polypeptide is Short-chain dehydrogenase/reductase 3 (DHRS3) (Bos taurus (Bovine)).